A 353-amino-acid polypeptide reads, in one-letter code: Photosystem II protein D1 (353 aa).

Position 2 is an N-acetylthreonine (Thr-2). Thr-2 carries the post-translational modification Phosphothreonine. A run of 3 helical transmembrane segments spans residues 29-46 (YIGW…TAIS), 118-133 (HFLL…EWEL), and 142-156 (WIAV…AATA). Position 118 (His-118) interacts with chlorophyll a. Pheophytin a is bound at residue Tyr-126. Positions 170 and 189 each coordinate [CaMn4O5] cluster. Residues 197–218 (FHMLGVAGVFGGSLFSAMHGSL) traverse the membrane as a helical segment. His-198 provides a ligand contact to chlorophyll a. A quinone-binding positions include His-215 and 264-265 (SF). Position 215 (His-215) interacts with Fe cation. Fe cation is bound at residue His-272. A helical transmembrane segment spans residues 274-288 (FLAVWPVVGIWFTAM). [CaMn4O5] cluster contacts are provided by His-332, Glu-333, Asp-342, and Ala-344. A propeptide spanning residues 345–353 (SVEAPAVNG) is cleaved from the precursor.

It belongs to the reaction center PufL/M/PsbA/D family. In terms of assembly, PSII is composed of 1 copy each of membrane proteins PsbA, PsbB, PsbC, PsbD, PsbE, PsbF, PsbH, PsbI, PsbJ, PsbK, PsbL, PsbM, PsbT, PsbX, PsbY, PsbZ, Psb30/Ycf12, at least 3 peripheral proteins of the oxygen-evolving complex and a large number of cofactors. It forms dimeric complexes. The cofactor is The D1/D2 heterodimer binds P680, chlorophylls that are the primary electron donor of PSII, and subsequent electron acceptors. It shares a non-heme iron and each subunit binds pheophytin, quinone, additional chlorophylls, carotenoids and lipids. D1 provides most of the ligands for the Mn4-Ca-O5 cluster of the oxygen-evolving complex (OEC). There is also a Cl(-1) ion associated with D1 and D2, which is required for oxygen evolution. The PSII complex binds additional chlorophylls, carotenoids and specific lipids.. In terms of processing, tyr-161 forms a radical intermediate that is referred to as redox-active TyrZ, YZ or Y-Z. Post-translationally, C-terminally processed by CTPA; processing is essential to allow assembly of the oxygen-evolving complex and thus photosynthetic growth.

Its subcellular location is the plastid. The protein localises to the chloroplast thylakoid membrane. It carries out the reaction 2 a plastoquinone + 4 hnu + 2 H2O = 2 a plastoquinol + O2. Functionally, photosystem II (PSII) is a light-driven water:plastoquinone oxidoreductase that uses light energy to abstract electrons from H(2)O, generating O(2) and a proton gradient subsequently used for ATP formation. It consists of a core antenna complex that captures photons, and an electron transfer chain that converts photonic excitation into a charge separation. The D1/D2 (PsbA/PsbD) reaction center heterodimer binds P680, the primary electron donor of PSII as well as several subsequent electron acceptors. The chain is Photosystem II protein D1 from Mesostigma viride (Green alga).